The chain runs to 227 residues: Ferritin light chain (227 aa).

An N-terminal signal peptide occupies residues 1 to 19 (MKFFVALALFACLGSLALA). A disulfide bridge connects residues C25 and C44. A Ferritin-like diiron domain is found at 48–208 (FAGIDHIEPE…GYANDLAKLM (161 aa)).

Belongs to the ferritin family. As to quaternary structure, oligomer of 12 light (L) chains and 12 heavy (H) chains; L and H chains are disulfide-linked. The functional molecule forms a roughly spherical shell with a diameter of 12 nm and contains a central cavity into which the insoluble ferric iron core is deposited. Expressed in hemolymph, gut, ovaries and to a lesser extent in testes (at protein level). Expressed in the head (at protein level).

The protein resides in the golgi apparatus. It is found in the secreted. Functionally, stores iron in a soluble, non-toxic, readily available form. Important for iron homeostasis. Iron is taken up in the ferrous form and deposited as ferric hydroxides after oxidation. Ferritin is composed of a heavy (H) chain which is responsible for the oxidation and uptake of ferrous iron, and a light (L) chain which facilitates the nucleation of the ferrihydrite iron core. Required for dietary iron absorption in the midgut. Involved in tissue iron detoxification by exporting excess iron. Plays a role in the maintenance of circadian rhythms. Required for embryo and larval development. The polypeptide is Ferritin light chain (Drosophila melanogaster (Fruit fly)).